Here is a 78-residue protein sequence, read N- to C-terminus: MKSSMKMFAALLLVVMCLLANEMGGPLVVEARTCESQSHKFKGTCLSDTNCANVCHSERFSGGKCRGFRRRCFCTTHC.

Positions 1 to 20 (MKSSMKMFAALLLVVMCLLA) are cleaved as a signal peptide. 4 disulfides stabilise this stretch: C34/C78, C45/C65, C51/C72, and C55/C74.

This sequence belongs to the DEFL family. In terms of tissue distribution, highest expression in flowers and to a lesser extent in leaves. Lower levels in hypocotyls. No expression in roots and cotyledons.

Its subcellular location is the secreted. It localises to the cell wall. May play a protective role in flowers by protecting the reproductive organs from potential pathogen attack. The sequence is that of Defensin SD2 (SD2) from Helianthus annuus (Common sunflower).